The primary structure comprises 809 residues: Phenylalanine--tRNA ligase beta subunit (809 aa).

The tRNA-binding domain maps to 39 to 152 (KDKWPNVYVG…ADAPVGMLAS (114 aa)). The region spanning 404–492 (KDRNSVVLSL…RIAGYDTIPC (89 aa)) is the B5 domain. Mg(2+) is bound by residues Asp-470, Asp-476, Glu-479, and Glu-480. Residues 717–808 (NRFPSVERDL…LNTETGAVLR (92 aa)) enclose the FDX-ACB domain.

This sequence belongs to the phenylalanyl-tRNA synthetase beta subunit family. Type 1 subfamily. As to quaternary structure, tetramer of two alpha and two beta subunits. Requires Mg(2+) as cofactor.

It is found in the cytoplasm. It catalyses the reaction tRNA(Phe) + L-phenylalanine + ATP = L-phenylalanyl-tRNA(Phe) + AMP + diphosphate + H(+). The chain is Phenylalanine--tRNA ligase beta subunit from Dehalococcoides mccartyi (strain ATCC BAA-2266 / KCTC 15142 / 195) (Dehalococcoides ethenogenes (strain 195)).